Here is a 341-residue protein sequence, read N- to C-terminus: Outer membrane protein assembly factor BamD (341 aa).

The N-terminal stretch at 1 to 17 is a signal peptide; sequence MQVKHLLLIAILALTAA. A lipid anchor (N-palmitoyl cysteine) is attached at Cys-18. Cys-18 carries the S-diacylglycerol cysteine lipid modification. Positions 289–316 are enriched in basic and acidic residues; sequence DVIKQYEDAEREIPAELKPENQDHSADD. The segment at 289–330 is disordered; it reads DVIKQYEDAEREIPAELKPENQDHSADDEKPESDDDEDSGRS. Positions 317–326 are enriched in acidic residues; sequence EKPESDDDED.

It belongs to the BamD family. As to quaternary structure, part of the Bam complex.

It is found in the cell outer membrane. In terms of biological role, part of the outer membrane protein assembly complex, which is involved in assembly and insertion of beta-barrel proteins into the outer membrane. This Pseudomonas aeruginosa (strain ATCC 15692 / DSM 22644 / CIP 104116 / JCM 14847 / LMG 12228 / 1C / PRS 101 / PAO1) protein is Outer membrane protein assembly factor BamD.